The following is a 46-amino-acid chain: Cytochrome b559 subunit beta (46 aa).

The chain crosses the membrane as a helical span at residues 21–37 (WLALHTLGIPTVFFLGA). His-25 is a binding site for heme.

The protein belongs to the PsbE/PsbF family. In terms of assembly, heterodimer of an alpha subunit and a beta subunit. PSII is composed of 1 copy each of membrane proteins PsbA, PsbB, PsbC, PsbD, PsbE, PsbF, PsbH, PsbI, PsbJ, PsbK, PsbL, PsbM, PsbT, PsbX, PsbY, PsbZ, Psb30/Ycf12, peripheral proteins PsbO, CyanoQ (PsbQ), PsbU, PsbV and a large number of cofactors. It forms dimeric complexes. Heme b serves as cofactor.

The protein resides in the cellular thylakoid membrane. This b-type cytochrome is tightly associated with the reaction center of photosystem II (PSII). PSII is a light-driven water:plastoquinone oxidoreductase that uses light energy to abstract electrons from H(2)O, generating O(2) and a proton gradient subsequently used for ATP formation. It consists of a core antenna complex that captures photons, and an electron transfer chain that converts photonic excitation into a charge separation. The chain is Cytochrome b559 subunit beta from Synechococcus sp. (strain CC9605).